Here is a 718-residue protein sequence, read N- to C-terminus: D-(-)-3-hydroxybutyrate oligomer hydrolase (718 aa).

The active-site Charge relay system is the Ser-320.

This sequence belongs to the D-(-)-3-hydroxybutyrate oligomer hydrolase family.

The protein localises to the cytoplasm. It catalyses the reaction (3R)-hydroxybutanoate dimer + H2O = 2 (R)-3-hydroxybutanoate + H(+). It participates in lipid metabolism; butanoate metabolism. Its activity is regulated as follows. Inhibited by diisopropylfluorophosphate (DFP). Functionally, participates in the degradation of poly-3-hydroxybutyrate (PHB). It works downstream of poly(3-hydroxybutyrate) depolymerase, hydrolyzing D(-)-3-hydroxybutyrate oligomers of various length (3HB-oligomers) into 3HB-monomers. Seems to have also poly(3-hydroxybutyrate) depolymerase activity since it is able to release 3HB-monomers from artificial amorphous PHB. The sequence is that of D-(-)-3-hydroxybutyrate oligomer hydrolase (phaZ2) from Cupriavidus necator (strain ATCC 17699 / DSM 428 / KCTC 22496 / NCIMB 10442 / H16 / Stanier 337) (Ralstonia eutropha).